The following is a 620-amino-acid chain: Threonine--tRNA ligase (620 aa).

The region spanning 1–42 is the TGS domain; that stretch reads MFEIAKGISNSLAKKSVGAKVDGKNVDMSYILDHDAEVEFID. The segment at 224 to 515 is catalytic; the sequence is DHRKLGKELE…LIEHYAGAFP (292 aa). Cys-315, His-366, and His-492 together coordinate Zn(2+).

The protein belongs to the class-II aminoacyl-tRNA synthetase family. Homodimer. Requires Zn(2+) as cofactor.

It localises to the cytoplasm. The catalysed reaction is tRNA(Thr) + L-threonine + ATP = L-threonyl-tRNA(Thr) + AMP + diphosphate + H(+). Functionally, catalyzes the attachment of threonine to tRNA(Thr) in a two-step reaction: L-threonine is first activated by ATP to form Thr-AMP and then transferred to the acceptor end of tRNA(Thr). Also edits incorrectly charged L-seryl-tRNA(Thr). This Fusobacterium nucleatum subsp. nucleatum (strain ATCC 25586 / DSM 15643 / BCRC 10681 / CIP 101130 / JCM 8532 / KCTC 2640 / LMG 13131 / VPI 4355) protein is Threonine--tRNA ligase.